Consider the following 363-residue polypeptide: 3-isopropylmalate dehydrogenase (363 aa).

Position 78–91 (78–91 (GKKWDDLPINQRPE)) interacts with NAD(+). R99, R109, R138, and D227 together coordinate substrate. Mg(2+)-binding residues include D227, D251, and D255. 285–297 (GSAPDIEGKNIAN) contributes to the NAD(+) binding site.

This sequence belongs to the isocitrate and isopropylmalate dehydrogenases family. LeuB type 1 subfamily. In terms of assembly, homodimer. The cofactor is Mg(2+). Requires Mn(2+) as cofactor.

It is found in the cytoplasm. The enzyme catalyses (2R,3S)-3-isopropylmalate + NAD(+) = 4-methyl-2-oxopentanoate + CO2 + NADH. It participates in amino-acid biosynthesis; L-leucine biosynthesis; L-leucine from 3-methyl-2-oxobutanoate: step 3/4. In terms of biological role, catalyzes the oxidation of 3-carboxy-2-hydroxy-4-methylpentanoate (3-isopropylmalate) to 3-carboxy-4-methyl-2-oxopentanoate. The product decarboxylates to 4-methyl-2 oxopentanoate. This Buchnera aphidicola subsp. Uroleucon rudbeckiae protein is 3-isopropylmalate dehydrogenase.